The following is a 335-amino-acid chain: Methyltransferase pgmE (335 aa).

The protein belongs to the methyltransferase superfamily.

The protein operates within pigment biosynthesis. It functions in the pathway secondary metabolite biosynthesis. In terms of biological role, methyltransferase; part of the gene cluster that mediates the biosynthesis of pleosporalin A, ascomycone A, as well as a third cryptic naphthoquinone derived pigment, all responsible for the coloration of conidia. Essential for the production of pleosporalin A, but not the 2 other final products. The pathway begins with the biosynthesis of the cyclized heptaketide 3-acetonyl-1,6,8-trihydroxy-2-naphthaldehyde by the NR-PKS pgmA. The C-6 hydroxyl group is further methylated by the O-methyltransferase pgmB to yield fusarubinaldehyde which is in turn oxidized by the cytochrome P450 monooxygenase pgmC at C-9. The C-1 hydroxyl group is then methylated spontaneously. Although pgmE, pgmD and pgmH are essential for the production of pleosporalin A, it is not the case for the 2 other final products and it remains difficult to assign a specific function to each enzyme. PgmF and pgmG seem not to be involved in pigment biosynthesis although they were regulated by the cluster-specific transcription factor pgmR. The chain is Methyltransferase pgmE from Aspergillus terreus (strain NIH 2624 / FGSC A1156).